The sequence spans 697 residues: Pentatricopeptide repeat-containing protein At5g46460, mitochondrial (697 aa).

Residues 1–36 (MWSRAIFQRFRFRAFSISHVIHGKCYRSFSVTVEFQ) constitute a mitochondrion transit peptide. PPR repeat units lie at residues 39-64 (EVLICNHLLSRRIDEAREVFNQVPSP), 65-95 (HVSLYTKMITGYTRSNRLVDALNLFDEMPVR), 96-130 (DVVSWNSMISGCVECGDMNTAVKLFDEMPERSVVS), 131-157 (WTAMVNGCFRSGKVDQAERLFYQMPVK), 158-192 (DTAAWNSMVHGYLQFGKVDDALKLFKQMPGKNVIS), 193-223 (WTTMICGLDQNERSGEALDLFKNMLRCCIKS), 224-258 (TSRPFTCVITACANAPAFHMGIQVHGLIIKLGFLY), 259-289 (EEYVSASLITFYANCKRIGDSRKVFDEKVHE), 290-324 (QVAVWTALLSGYSLNKKHEDALSIFSGMLRNSILP), 325-359 (NQSTFASGLNSCSALGTLDWGKEMHGVAVKLGLET), 360-390 (DAFVGNSLVVMYSDSGNVNDAVSVFIKIFKK), 391-425 (SIVSWNSIIVGCAQHGRGKWAFVIFGQMIRLNKEP), 426-456 (DEITFTGLLSACSHCGFLEKGRKLFYYMSSG), and 463-497 (KIQHYTCMVDILGRCGKLKEAEELIERMVVKPNEM). The type E motif stretch occupies residues 498–573 (VWLALLSACR…KPGSSWVVIR (76 aa)). A type E(+) motif region spans residues 574–602 (GKKHEFFSGDQPHCSRIYEKLEFLREKLK). A type DYW motif region spans residues 603-697 (ELGYAPDYRS…NGTCSCGDYW (95 aa)).

It belongs to the PPR family. PCMP-H subfamily.

It localises to the mitochondrion. This Arabidopsis thaliana (Mouse-ear cress) protein is Pentatricopeptide repeat-containing protein At5g46460, mitochondrial (PCMP-H49).